The sequence spans 405 residues: Replication factor C large subunit (405 aa).

47 to 54 (GPPGVGKT) serves as a coordination point for ATP.

This sequence belongs to the activator 1 small subunits family. RfcL subfamily. Heteromultimer composed of small subunits (RfcS) and large subunits (RfcL).

In terms of biological role, part of the RFC clamp loader complex which loads the PCNA sliding clamp onto DNA. This Saccharolobus islandicus (strain M.16.4 / Kamchatka #3) (Sulfolobus islandicus) protein is Replication factor C large subunit.